The primary structure comprises 433 residues: Staphylopine synthase (433 aa).

Residues 9–12, R33, 37–40, and D99 contribute to the NADP(+) site; these read TGPV and SEKS. The active-site Proton donor/acceptor is H216.

It belongs to the staphylopine dehydrogenase family. As to quaternary structure, homodimer.

It carries out the reaction staphylopine + NADP(+) + H2O = (2S)-2-amino-4-{[(1R)-1-carboxy-2-(1H-imidazol-4-yl)ethyl]amino}butanoate + pyruvate + NADPH + H(+). Its function is as follows. Catalyzes the NADPH-dependent reductive condensation of pyruvate to the intermediate formed by the adjacently encoded enzyme CntL, namely (2S)-2-amino-4-{[(1R)-1-carboxy-2-(1H-imidazol-4-yl)ethyl]amino}butanoate, leading to the production of staphylopine. This is the last step in the biosynthesis of the metallophore staphylopine, which is involved in the acquisition of nickel, cobalt, zinc, copper, and iron, and thus enables bacterial growth inside the host, where metal access is limited. Therefore, this enzyme probably contributes to staphylococcal virulence. Can use neither NADH nor alpha-ketoglutarate in place of NADPH and pyruvate, respectively. The protein is Staphylopine synthase of Staphylococcus aureus (strain Mu50 / ATCC 700699).